Consider the following 349-residue polypeptide: tRNA pseudouridine synthase D (349 aa).

Substrate is bound at residue Phe-26. Residue Asp-79 is the Nucleophile of the active site. Asn-128 lines the substrate pocket. The 149-residue stretch at 154 to 302 (GVPNYFGEQR…VEGCRRAILV (149 aa)) folds into the TRUD domain. A substrate-binding site is contributed by Phe-328.

It belongs to the pseudouridine synthase TruD family.

The enzyme catalyses uridine(13) in tRNA = pseudouridine(13) in tRNA. Functionally, responsible for synthesis of pseudouridine from uracil-13 in transfer RNAs. The sequence is that of tRNA pseudouridine synthase D from Photorhabdus laumondii subsp. laumondii (strain DSM 15139 / CIP 105565 / TT01) (Photorhabdus luminescens subsp. laumondii).